A 77-amino-acid polypeptide reads, in one-letter code: U8-lycotoxin-Ls1f (77 aa).

An N-terminal signal peptide occupies residues methionine 1–valine 20. A propeptide spanning residues glutamine 21–arginine 26 is cleaved from the precursor.

The protein belongs to the neurotoxin 19 (CSTX) family. 08 (U8-Lctx) subfamily. Contains 4 disulfide bonds. As to expression, expressed by the venom gland.

Its subcellular location is the secreted. The sequence is that of U8-lycotoxin-Ls1f from Lycosa singoriensis (Wolf spider).